A 580-amino-acid chain; its full sequence is WD repeat-containing protein 46 (580 aa).

Residues 34-108 (SWKEYKKMKQ…QQEKMKVTKD (75 aa)) are disordered. Basic and acidic residues-rich tracts occupy residues 64-85 (TEGRAKKPKVLTKEQLERHDTG) and 98-108 (LQQEKMKVTKD). WD repeat units lie at residues 193 to 234 (AALD…YTYV), 235 to 272 (YDNLGTELHCLKTMYDTARLEFLPHHFLLVGSSRNSFL), 274 to 312 (YVDVSVGKQVASFATKSGTLDVMCQNPANAIIHTGHTNG), 315 to 354 (SLWSPNSKEPLVKILTHLSAVKGIAVDDQGNYMATTGLDR), 357 to 396 (RIWDVRMFRQLHAYSLPFGVSNVAISQKMNVACAVGNHVQ), and 399 to 436 (RGMHNGTCKEPYLVHNCGGVVTDLRFVPWEDVLGIGHA).

Part of the small subunit (SSU) processome.

It is found in the nucleus. It localises to the nucleolus. Its function is as follows. Scaffold component of the nucleolar structure. Part of the small subunit (SSU) processome, first precursor of the small eukaryotic ribosomal subunit. Required for 18S rRNA processing. Plays a role in negative regulation of detoxification genes by inhibiting protein levels of transcription factor skn-1, leading to down-regulation of skn-1 target genes. This Caenorhabditis elegans protein is WD repeat-containing protein 46.